We begin with the raw amino-acid sequence, 658 residues long: Exoribonuclease 2 (658 aa).

The RNB domain occupies Arg-189 to Leu-530. The region spanning Ala-576–Ile-658 is the S1 motif domain.

The protein belongs to the RNR ribonuclease family. RNase II subfamily.

The protein localises to the cytoplasm. It carries out the reaction Exonucleolytic cleavage in the 3'- to 5'-direction to yield nucleoside 5'-phosphates.. Functionally, involved in mRNA degradation. Hydrolyzes single-stranded polyribonucleotides processively in the 3' to 5' direction. This chain is Exoribonuclease 2, found in Actinobacillus pleuropneumoniae serotype 3 (strain JL03).